Reading from the N-terminus, the 2223-residue chain is Sperm-associated antigen 17 (2223 aa).

2 stretches are compositionally biased toward basic and acidic residues: residues 144 to 172 and 200 to 212; these read RENE…EKKA and RRGE…RYID. A disordered region spans residues 144-214; it reads RENEKKVIED…DHTNRYIDDE (71 aa). A coiled-coil region spans residues 266–295; that stretch reads NQQQEVLLQSEDLEAEKLKKENAIKELKTF. Disordered regions lie at residues 387 to 416, 680 to 710, 731 to 762, 950 to 1015, 1179 to 1212, and 1345 to 1378; these read MPTS…PPPV, MSVQ…LNNL, PQHE…PKKM, EERL…EPKI, GKIK…PEPV, and ETIP…PPPE. Composition is skewed to basic and acidic residues over residues 743–756, 950–999, and 1182–1205; these read EIKD…DSHE, EERL…EQVK, and KGKE…KKEE. Positions 940–966 form a coiled coil; that stretch reads WKEEQHRLAEEERLREEKKAEKKGKEA. Positions 1345–1354 are enriched in polar residues; it reads ETIPSEITNT. Residues 1874–1907 are a coiled coil; it reads RHTASSKRWKEKIDKTRKEIETTQNYLMDIKNRI. Disordered regions lie at residues 1938 to 1957 and 1962 to 2008; these read TKKN…DLNL and HKVS…SYEP. A compositionally biased stretch (polar residues) spans 1988-1998; the sequence is TAQNQTENLTK.

Interacts (via the C-terminus) with SPAG6; the interaction probably occurs on polymerized microtubules. In terms of tissue distribution, highly expressed in testis. Expressed in organs that contain cilia-bearing cells including brain, oviduct, lung, and uterus.

The protein localises to the cytoplasm. Its subcellular location is the cytoskeleton. It localises to the flagellum axoneme. The protein resides in the cytoplasmic vesicle. It is found in the secretory vesicle. The protein localises to the acrosome. Its subcellular location is the golgi apparatus. Its function is as follows. Component of the central pair apparatus of ciliary axonemes. Plays a critical role in the function and structure of motile cilia. May play a role in endochondral bone formation, most likely because of a function in primary cilia of chondrocytes and osteoblasts. Essential for normal spermatogenesis and male fertility. Required for normal manchette structure, transport of proteins along the manchette microtubules and formation of the sperm head and flagellum. Essential for sperm flagellum development and proper assembly of the respiratory motile cilia central pair apparatus, but not the brain ependymal cilia. The chain is Sperm-associated antigen 17 (SPAG17) from Homo sapiens (Human).